Here is a 467-residue protein sequence, read N- to C-terminus: Tubulointerstitial nephritis antigen-like (467 aa).

Positions 1-21 (MWRCPLGLLLLLPLAGHLALG) are cleaved as a signal peptide. One can recognise an SMB domain in the interval 50–98 (EQDLCCRGRADDCALPYLGAICYCDLFCNRTVSDCCPDFWDFCLGVPPP). Cystine bridges form between C54–C73, C71–C73, C71–C85, C77–C84, and C85–C92. Residue N78 is glycosylated (N-linked (GlcNAc...) asparagine). A glycan (N-linked (GlcNAc...) asparagine) is linked at N161.

The protein belongs to the peptidase C1 family. In terms of processing, glycosylated. As to expression, highly expressed in aorta, heart, placenta, kidney and a colorectal adenocarcinoma cell line. Moderately expressed in skeletal muscle, pancreas, lung, lymph nodes, adrenal gland, bone marrow and thyroid. Weakly expressed in colon, small intestine, ovary, spleen, testis and prostate. Predominantly found in vascular smooth muscle cells, but also in cardiac and skeletal muscle cells as well as kidney.

The protein localises to the secreted. In terms of biological role, may be implicated in the adrenocortical zonation and in mechanisms for repressing the CYP11B1 gene expression in adrenocortical cells. This is a non catalytic peptidase C1 family protein. The chain is Tubulointerstitial nephritis antigen-like (TINAGL1) from Homo sapiens (Human).